The chain runs to 388 residues: Mannitol-1-phosphate 5-dehydrogenase (388 aa).

5-16 (AIQFGGGNIGRG) serves as a coordination point for NAD(+). Lys-213 is an active-site residue.

The protein belongs to the mannitol dehydrogenase family. Monomer.

The enzyme catalyses D-mannitol 1-phosphate + NAD(+) = beta-D-fructose 6-phosphate + NADH + H(+). In terms of biological role, catalyzes the NAD(H)-dependent interconversion of D-fructose 6-phosphate and D-mannitol 1-phosphate in the mannitol metabolic pathway. Has a strong preference for NADH over NADPH. Required for protection of conidiospores against exogenous stresses such as high temperatures and an oxidative environment. The polypeptide is Mannitol-1-phosphate 5-dehydrogenase (mpdA) (Aspergillus niger).